Reading from the N-terminus, the 556-residue chain is Secreted lipase 4 (556 aa).

An N-terminal signal peptide occupies residues 1–21; the sequence is MKLLTNIGTLLALSPVQQVSA. Asn-46, Asn-263, Asn-305, Asn-411, and Asn-453 each carry an N-linked (GlcNAc...) asparagine glycan.

Belongs to the type-B carboxylesterase/lipase family.

The protein localises to the secreted. It carries out the reaction a carboxylic ester + H2O = an alcohol + a carboxylate + H(+). In terms of biological role, secreted lipase involved in plant virulence. Has a substrate preference for p-nitrophenyl esters with a carbon chain length of C12 (p-nitrophenyl laureate). In Gibberella zeae (strain ATCC MYA-4620 / CBS 123657 / FGSC 9075 / NRRL 31084 / PH-1) (Wheat head blight fungus), this protein is Secreted lipase 4.